We begin with the raw amino-acid sequence, 146 residues long: Transcriptional regulator MraZ (146 aa).

2 consecutive SpoVT-AbrB domains span residues 9 to 55 and 81 to 124; these read ASAL…PRPA and AMDV…DVQR.

The protein belongs to the MraZ family. In terms of assembly, forms oligomers.

It is found in the cytoplasm. The protein localises to the nucleoid. The protein is Transcriptional regulator MraZ of Methylibium petroleiphilum (strain ATCC BAA-1232 / LMG 22953 / PM1).